A 301-amino-acid chain; its full sequence is Probable alpha-L-glutamate ligase (301 aa).

An ATP-grasp domain is found at 104–287; that stretch reads LQLLSRKGIG…VADEIIRFIE (184 aa). ATP is bound by residues K141, 178–179, D187, and 211–213; these read EF and RSN. D248, E260, and N262 together coordinate Mg(2+). Mn(2+) is bound by residues D248, E260, and N262.

Belongs to the RimK family. Requires Mg(2+) as cofactor. It depends on Mn(2+) as a cofactor.

The polypeptide is Probable alpha-L-glutamate ligase (Syntrophotalea carbinolica (strain DSM 2380 / NBRC 103641 / GraBd1) (Pelobacter carbinolicus)).